A 380-amino-acid polypeptide reads, in one-letter code: Cytochrome b (380 aa).

4 helical membrane passes run 34 to 54, 78 to 99, 114 to 134, and 179 to 199; these read FGSL…LLAM, WLIR…FLHI, WNTG…GYVL, and FFAL…THLM. H84 and H98 together coordinate heme b. H183 and H197 together coordinate heme b. H202 is an a ubiquinone binding site. 4 consecutive transmembrane segments (helical) span residues 227 to 247, 289 to 309, 321 to 341, and 348 to 368; these read LKDI…ALFS, LGGV…PFLH, LSQT…WVGS, and FIII…ILFP.

It belongs to the cytochrome b family. In terms of assembly, the cytochrome bc1 complex contains 11 subunits: 3 respiratory subunits (MT-CYB, CYC1 and UQCRFS1), 2 core proteins (UQCRC1 and UQCRC2) and 6 low-molecular weight proteins (UQCRH/QCR6, UQCRB/QCR7, UQCRQ/QCR8, UQCR10/QCR9, UQCR11/QCR10 and a cleavage product of UQCRFS1). This cytochrome bc1 complex then forms a dimer. Heme b is required as a cofactor.

The protein localises to the mitochondrion inner membrane. Functionally, component of the ubiquinol-cytochrome c reductase complex (complex III or cytochrome b-c1 complex) that is part of the mitochondrial respiratory chain. The b-c1 complex mediates electron transfer from ubiquinol to cytochrome c. Contributes to the generation of a proton gradient across the mitochondrial membrane that is then used for ATP synthesis. The chain is Cytochrome b (MT-CYB) from Tragopan satyra (Satyr tragopan).